Consider the following 332-residue polypeptide: NADH-quinone oxidoreductase subunit H (332 aa).

The next 9 helical transmembrane spans lie at 4-24, 44-64, 78-98, 120-140, 165-185, 194-214, 255-275, 279-299, and 312-332; these read FAFF…IFAS, IGPD…MIKL, FIFA…LAAI, VALL…FLGG, VGAL…LVDI, FSWL…ALFI, IAGA…FWII, IMMI…RAAF, and YLIL…AVLL.

This sequence belongs to the complex I subunit 1 family. NDH-1 is composed of 14 different subunits. Subunits NuoA, H, J, K, L, M, N constitute the membrane sector of the complex.

It localises to the cell inner membrane. The catalysed reaction is a quinone + NADH + 5 H(+)(in) = a quinol + NAD(+) + 4 H(+)(out). In terms of biological role, NDH-1 shuttles electrons from NADH, via FMN and iron-sulfur (Fe-S) centers, to quinones in the respiratory chain. The immediate electron acceptor for the enzyme in this species is believed to be ubiquinone. Couples the redox reaction to proton translocation (for every two electrons transferred, four hydrogen ions are translocated across the cytoplasmic membrane), and thus conserves the redox energy in a proton gradient. This subunit may bind ubiquinone. In Campylobacter jejuni subsp. jejuni serotype O:6 (strain 81116 / NCTC 11828), this protein is NADH-quinone oxidoreductase subunit H.